A 142-amino-acid chain; its full sequence is Large ribosomal subunit protein uL11 (142 aa).

Belongs to the universal ribosomal protein uL11 family. Part of the ribosomal stalk of the 50S ribosomal subunit. Interacts with L10 and the large rRNA to form the base of the stalk. L10 forms an elongated spine to which L12 dimers bind in a sequential fashion forming a multimeric L10(L12)X complex. In terms of processing, one or more lysine residues are methylated.

In terms of biological role, forms part of the ribosomal stalk which helps the ribosome interact with GTP-bound translation factors. The chain is Large ribosomal subunit protein uL11 from Shewanella sediminis (strain HAW-EB3).